The chain runs to 619 residues: MYGFVNHALELLVIRNYGPEVWEDIKKEAQLDEEGQFLVRIIYDDSKTYDLVAAASKVLNLNAGEILQMFGKMFFVFCQESGYDTILRVLGSNVREFLQNLDALHDHLATIYPGMRAPSFRCTDAEKGKGLILHYYSEREGLQDIVIGIIKTVAQQIHGTEIDMKVIQQRNEECDHTQFLIEEKESKEEDFYEDLDRFEENGTQESRISPYTFCKAFPFHIIFDRDLVVTQCGNAIYRVLPQLQPGNCSLLSVFSLVRPHIDISFHGILSHINTVFVLRSKEGLLDVEKLECEDELTGTEISCLRLKGQMIYLPEADSILFLCSPSVMNLDDLTRRGLYLSDIPLHDATRDLVLLGEQFREEYKLTQELEILTDRLQLTLRALEDEKKKTDTLLYSVLPPSVANELRHKRPVPAKRYDNVTILFSGIVGFNAFCSKHASGEGAMKIVNLLNDLYTRFDTLTDSRKNPFVYKVETVGDKYMTVSGLPEPCIHHARSICHLALDMMEIAGQVQVDGESVQITIGIHTGEVVTGVIGQRMPRYCLFGNTVNLTSRTETTGEKGKINVSEYTYRCLMSPENSDPQFHLEHRGPVSMKGKKEPMQVWFLSRKNTGTEETKQDDD.

H105 is a heme binding site. The region spanning 421–554 (TILFSGIVGF…NTVNLTSRTE (134 aa)) is the Guanylate cyclase domain.

The protein belongs to the adenylyl cyclase class-4/guanylyl cyclase family. In terms of assembly, the active enzyme is formed by a heterodimer of an alpha and a beta subunit. Heterodimer with GUCY1A1. Can also form inactive homodimers in vitro. The cofactor is heme. In terms of tissue distribution, detected in brain cortex and cerebellum (at protein level).

It localises to the cytoplasm. The catalysed reaction is GTP = 3',5'-cyclic GMP + diphosphate. With respect to regulation, activated by nitric oxide in the presence of magnesium or manganese ions. Mediates responses to nitric oxide (NO) by catalyzing the biosynthesis of the signaling molecule cGMP. This is Guanylate cyclase soluble subunit beta-1 from Homo sapiens (Human).